A 466-amino-acid chain; its full sequence is Methylenetetrahydrofolate--tRNA-(uracil-5-)-methyltransferase TrmFO (466 aa).

Residue 12–17 (GAGLAG) coordinates FAD.

Belongs to the MnmG family. TrmFO subfamily. FAD is required as a cofactor.

It localises to the cytoplasm. It carries out the reaction uridine(54) in tRNA + (6R)-5,10-methylene-5,6,7,8-tetrahydrofolate + NADH + H(+) = 5-methyluridine(54) in tRNA + (6S)-5,6,7,8-tetrahydrofolate + NAD(+). The catalysed reaction is uridine(54) in tRNA + (6R)-5,10-methylene-5,6,7,8-tetrahydrofolate + NADPH + H(+) = 5-methyluridine(54) in tRNA + (6S)-5,6,7,8-tetrahydrofolate + NADP(+). Catalyzes the folate-dependent formation of 5-methyl-uridine at position 54 (M-5-U54) in all tRNAs. The chain is Methylenetetrahydrofolate--tRNA-(uracil-5-)-methyltransferase TrmFO from Synechococcus elongatus (strain ATCC 33912 / PCC 7942 / FACHB-805) (Anacystis nidulans R2).